The chain runs to 241 residues: Tumor necrosis factor receptor superfamily member grnd (241 aa).

Positions 1–27 (MSVRKLSALSLSIGGVPLIPSVSLVAA) are cleaved as a signal peptide. Topologically, residues 28 to 98 (ANGESRDCHG…EMLDIQNTQQ (71 aa)) are extracellular. Disulfide bonds link C35–C47, C40–C54, C57–C77, and C61–C73. N63 is a glycosylation site (N-linked (GlcNAc...) asparagine). Residues 99 to 119 (LILLLLTILLVLIALRCAFQF) traverse the membrane as a helical segment. Topologically, residues 120-241 (LRWLIGNRCF…PSAATIPVAF (122 aa)) are cytoplasmic.

In terms of assembly, interacts (via extracellular cysteine-rich domain) with egr (via secreted TNF-homology soluble form); forms heterohexamers when 3 copies associate with egr trimers. Interacts with Traf6/TRAF2 and veli (via PDZ domain). Post-translationally, N-glycosylated on Asn-63. Glycosylation regulates ligand binding, specifically reducing affinity for the TNF egr, thereby inhibiting activation of JNK signaling. In terms of tissue distribution, expressed in the adult midgut; under normal conditions expressed at lower levels than the other TNF receptor wgn.

The protein resides in the apical cell membrane. The protein localises to the cytoplasmic vesicle membrane. Acts as a receptor for TNF-cytokine egr. Plays a role in activation of JNK signaling and is required for egr-induced apoptosis, including in wing imaginal discs during development. May also play an egr-independent role in cell proliferation. TNF receptor involved in triggering JNK-dependent proliferation of the enteroblast-enterocyte lineage in response to stress-induced release of egr by intestinal stem cells and enteroblasts. Involved in regulation of insulin production in response to dietary protein shortage keeping systemic growth in check. Activation in brain insulin producing cells through binding of egr released into the hemolymph in response to dietary amino acid shortage, results in JNK-dependent inhibition of insulin production. This chain is Tumor necrosis factor receptor superfamily member grnd, found in Drosophila melanogaster (Fruit fly).